We begin with the raw amino-acid sequence, 285 residues long: 2-dehydro-3-deoxyphosphooctonate aldolase (285 aa).

This sequence belongs to the KdsA family.

Its subcellular location is the cytoplasm. It carries out the reaction D-arabinose 5-phosphate + phosphoenolpyruvate + H2O = 3-deoxy-alpha-D-manno-2-octulosonate-8-phosphate + phosphate. The protein operates within carbohydrate biosynthesis; 3-deoxy-D-manno-octulosonate biosynthesis; 3-deoxy-D-manno-octulosonate from D-ribulose 5-phosphate: step 2/3. It participates in bacterial outer membrane biogenesis; lipopolysaccharide biosynthesis. The sequence is that of 2-dehydro-3-deoxyphosphooctonate aldolase from Delftia acidovorans (strain DSM 14801 / SPH-1).